The sequence spans 297 residues: Putative phosphate permease MJ0630 (297 aa).

9 helical membrane passes run 2–22 (ITIE…LFIL), 45–65 (LLIL…NVGS), 67–87 (VNSL…VMTL), 99–119 (TVII…YVFG), 121–141 (ILLS…ILYS), 154–174 (ITMI…NLGS), 180–200 (VLGT…FLCL), 225–245 (FIAQ…GMPV), and 274–294 (NIIF…FIIN).

The protein belongs to the inorganic phosphate transporter (PiT) (TC 2.A.20) family.

The protein resides in the cell membrane. Its function is as follows. Potential transporter for phosphate. This chain is Putative phosphate permease MJ0630, found in Methanocaldococcus jannaschii (strain ATCC 43067 / DSM 2661 / JAL-1 / JCM 10045 / NBRC 100440) (Methanococcus jannaschii).